Here is a 155-residue protein sequence, read N- to C-terminus: Small ribosomal subunit protein uS7cz/uS7cy (155 aa).

The protein belongs to the universal ribosomal protein uS7 family. Part of the 30S ribosomal subunit.

The protein resides in the plastid. It is found in the chloroplast. Its function is as follows. One of the primary rRNA binding proteins, it binds directly to 16S rRNA where it nucleates assembly of the head domain of the 30S subunit. This is Small ribosomal subunit protein uS7cz/uS7cy (rps7-A) from Acorus calamus var. americanus (American sweet flag).